A 740-amino-acid chain; its full sequence is Glycerol dehydrogenase large subunit (740 aa).

The N-terminal stretch at 1–29 is a signal peptide; that stretch reads MRRPYLLATAAGLALACSPLIAHAQFAPA. Disordered stretches follow at residues 28 to 105 and 442 to 468; these read PAGA…GDWV and LPVE…PWSV. Over residues 34 to 43 the composition is skewed to low complexity; the sequence is EPSSSVPGPG. Positions 46-58 are enriched in polar residues; it reads SEPTENSPKSQSY.

The protein belongs to the bacterial PQQ dehydrogenase family. Requires pyrroloquinoline quinone as cofactor.

The protein localises to the secreted. The enzyme catalyses glycerol + A = dihydroxyacetone + AH2. In terms of biological role, catalyzes the oxidation of glycerol to glycerone. Also acts, more slowly, on a number of other polyols including D-sorbitol, D-arabinitol, D-mannitol, meso-erythritol, adonitol and propylene glycol. The polypeptide is Glycerol dehydrogenase large subunit (sldA) (Gluconobacter thailandicus).